We begin with the raw amino-acid sequence, 256 residues long: Putative F-box protein At3g51171 (256 aa).

In terms of domain architecture, F-box spans 1 to 44; it reads MVPLPWELEEDILSRLAAQSLVRFRSVCKRWNYLFDEKSFIKNH.

The sequence is that of Putative F-box protein At3g51171 from Arabidopsis thaliana (Mouse-ear cress).